The sequence spans 790 residues: Pre-mRNA-splicing factor cwf3 (790 aa).

HAT repeat units follow at residues Asp12–Gly44, Ser45–Ala77, Glu89–Lys121, Pro123–Asp157, Gly159–Leu190, Glu193–Gln228, Thr233–Arg266, Gly268–Gln303, Lys331–Asp364, Lys368–Asn402, Asp404–Arg440, Ala457–Ser492, Gly494–Glu526, Ala528–Lys562, Thr567–Lys601, Tyr639–Lys673, and Gly675–Arg709. The tract at residues Leu769–Asn790 is disordered. Positions Ser775 to Asn790 are enriched in polar residues.

Belongs to the crooked-neck family. Belongs to the 40S cdc5-associated complex (or cwf complex), a spliceosome sub-complex reminiscent of a late-stage spliceosome composed of the U2, U5 and U6 snRNAs and at least brr2, cdc5, cwf2/prp3, cwf3/syf1, cwf4/syf3, cwf5/ecm2, spp42/cwf6, cwf7/spf27, cwf8, cwf9, cwf10, cwf11, cwf12, prp45/cwf13, cwf14, cwf15, cwf16, cwf17, cwf18, cwf19, cwf20, cwf21, cwf22, cwf23, cwf24, cwf25, cwf26, cyp7/cwf27, cwf28, cwf29/ist3, lea1, msl1, prp5/cwf1, prp10, prp12/sap130, prp17, prp22, sap61, sap62, sap114, sap145, slu7, smb1, smd1, smd3, smf1, smg1 and syf2.

It is found in the nucleus. Involved in pre-mRNA splicing and cell cycle progression. This Schizosaccharomyces pombe (strain 972 / ATCC 24843) (Fission yeast) protein is Pre-mRNA-splicing factor cwf3 (cwf3).